The chain runs to 236 residues: Purine nucleoside phosphorylase DeoD-type (236 aa).

An a purine D-ribonucleoside-binding site is contributed by His5. Residues Gly21, Arg25, Arg44, and 88–91 (RIGS) contribute to the phosphate site. A purine D-ribonucleoside contacts are provided by residues 180-182 (EME) and 204-205 (SD). Catalysis depends on Asp205, which acts as the Proton donor.

The protein belongs to the PNP/UDP phosphorylase family. Homohexamer; trimer of homodimers.

It carries out the reaction a purine D-ribonucleoside + phosphate = a purine nucleobase + alpha-D-ribose 1-phosphate. The enzyme catalyses a purine 2'-deoxy-D-ribonucleoside + phosphate = a purine nucleobase + 2-deoxy-alpha-D-ribose 1-phosphate. In terms of biological role, catalyzes the reversible phosphorolytic breakdown of the N-glycosidic bond in the beta-(deoxy)ribonucleoside molecules, with the formation of the corresponding free purine bases and pentose-1-phosphate. The chain is Purine nucleoside phosphorylase DeoD-type from Chromobacterium violaceum (strain ATCC 12472 / DSM 30191 / JCM 1249 / CCUG 213 / NBRC 12614 / NCIMB 9131 / NCTC 9757 / MK).